Reading from the N-terminus, the 230-residue chain is 2,3-bisphosphoglycerate-dependent phosphoglycerate mutase (230 aa).

Substrate contacts are provided by residues 8-15 (RHGESEWN), 21-22 (TG), Arg-60, 87-90 (ERHY), Lys-98, 114-115 (RR), and 183-184 (GN). His-9 (tele-phosphohistidine intermediate) is an active-site residue. Catalysis depends on Glu-87, which acts as the Proton donor/acceptor.

It belongs to the phosphoglycerate mutase family. BPG-dependent PGAM subfamily.

It carries out the reaction (2R)-2-phosphoglycerate = (2R)-3-phosphoglycerate. Its pathway is carbohydrate degradation; glycolysis; pyruvate from D-glyceraldehyde 3-phosphate: step 3/5. Functionally, catalyzes the interconversion of 2-phosphoglycerate and 3-phosphoglycerate. The chain is 2,3-bisphosphoglycerate-dependent phosphoglycerate mutase from Streptococcus uberis (strain ATCC BAA-854 / 0140J).